We begin with the raw amino-acid sequence, 342 residues long: UDP-3-O-acylglucosamine N-acyltransferase (342 aa).

Histidine 243 (proton acceptor) is an active-site residue.

Belongs to the transferase hexapeptide repeat family. LpxD subfamily. As to quaternary structure, homotrimer.

The catalysed reaction is a UDP-3-O-[(3R)-3-hydroxyacyl]-alpha-D-glucosamine + a (3R)-hydroxyacyl-[ACP] = a UDP-2-N,3-O-bis[(3R)-3-hydroxyacyl]-alpha-D-glucosamine + holo-[ACP] + H(+). Its pathway is bacterial outer membrane biogenesis; LPS lipid A biosynthesis. In terms of biological role, catalyzes the N-acylation of UDP-3-O-acylglucosamine using 3-hydroxyacyl-ACP as the acyl donor. Is involved in the biosynthesis of lipid A, a phosphorylated glycolipid that anchors the lipopolysaccharide to the outer membrane of the cell. This is UDP-3-O-acylglucosamine N-acyltransferase from Coxiella burnetii (strain CbuK_Q154) (Coxiella burnetii (strain Q154)).